Consider the following 454-residue polypeptide: tRNA modification GTPase MnmE (454 aa).

The (6S)-5-formyl-5,6,7,8-tetrahydrofolate site is built by arginine 23, glutamate 80, and lysine 120. The TrmE-type G domain occupies 216–377 (GMKVVIAGRP…LRNHLKQSMG (162 aa)). Asparagine 226 contacts K(+). GTP is bound by residues 226–231 (NAGKSS), 245–251 (TDIAGTT), 270–273 (DTAG), 335–338 (NKAD), and 358–360 (SAR). A Mg(2+)-binding site is contributed by serine 230. Positions 245, 247, and 250 each coordinate K(+). A Mg(2+)-binding site is contributed by threonine 251. A (6S)-5-formyl-5,6,7,8-tetrahydrofolate-binding site is contributed by lysine 454.

This sequence belongs to the TRAFAC class TrmE-Era-EngA-EngB-Septin-like GTPase superfamily. TrmE GTPase family. In terms of assembly, homodimer. Heterotetramer of two MnmE and two MnmG subunits. The cofactor is K(+).

It is found in the cytoplasm. Its function is as follows. Exhibits a very high intrinsic GTPase hydrolysis rate. Involved in the addition of a carboxymethylaminomethyl (cmnm) group at the wobble position (U34) of certain tRNAs, forming tRNA-cmnm(5)s(2)U34. This chain is tRNA modification GTPase MnmE, found in Shigella boydii serotype 18 (strain CDC 3083-94 / BS512).